Consider the following 271-residue polypeptide: uncharacterized protein (271 aa).

The signal sequence occupies residues 1-22 (MARELLFLACAIVIADSWPAKA).

This is an uncharacterized protein from Sinorhizobium fredii (strain NBRC 101917 / NGR234).